The primary structure comprises 914 residues: TRPM8 channel-associated factor 3 (914 aa).

The region spanning 533–832 (NSWVSTGLYL…TYLQLQEGFG (300 aa)) is the Peptidase M60 domain.

This sequence belongs to the TCAF family. Prostate-specific. Present in both dorso-lateral and anterior prostate.

Functionally, may play a role in the regulation of the cation channel TRPM8 activity. This chain is TRPM8 channel-associated factor 3, found in Mus musculus (Mouse).